The chain runs to 267 residues: Translation initiation factor 2 subunit alpha (267 aa).

Residues 10-81 enclose the S1 motif domain; it reads GELVVGKVDD…SAQQIDLSLK (72 aa).

It belongs to the eIF-2-alpha family. In terms of assembly, heterotrimer composed of an alpha, a beta and a gamma chain.

In terms of biological role, eIF-2 functions in the early steps of protein synthesis by forming a ternary complex with GTP and initiator tRNA. The polypeptide is Translation initiation factor 2 subunit alpha (Halobacterium salinarum (strain ATCC 29341 / DSM 671 / R1)).